Consider the following 888-residue polypeptide: Dilute domain-containing protein YPR089W (888 aa).

One can recognise a Dilute domain in the interval 360-745 (DIVLQSYWLS…KKFLNNKIKD (386 aa)). Disordered stretches follow at residues 462–504 (KEQQ…NNSS), 805–827 (KQRQ…TGDE), and 865–888 (LNIP…QNPW). 2 stretches are compositionally biased toward polar residues: residues 809–823 (NEPQ…TSDF) and 867–880 (IPSS…WSNN).

It is found in the golgi apparatus. This is Dilute domain-containing protein YPR089W from Saccharomyces cerevisiae (strain ATCC 204508 / S288c) (Baker's yeast).